A 292-amino-acid chain; its full sequence is UPF0282 protein MJ1629 (292 aa).

The protein belongs to the UPF0282 family.

The chain is UPF0282 protein MJ1629 from Methanocaldococcus jannaschii (strain ATCC 43067 / DSM 2661 / JAL-1 / JCM 10045 / NBRC 100440) (Methanococcus jannaschii).